A 596-amino-acid chain; its full sequence is Beta-fructofuranosidase, insoluble isoenzyme 6 (596 aa).

Residues 1-25 (MALAGLPLSVFAIAVHFCLVFSSSS) form the signal peptide. Residues 49-52 (WQND), glutamine 68, and tryptophan 76 each bind substrate. Residue aspartate 52 is part of the active site. A glycan (N-linked (GlcNAc...) asparagine) is linked at asparagine 80. Substrate-binding positions include 113–114 (AS), 177–178 (RD), and glutamate 232. Asparagine 335 carries an N-linked (GlcNAc...) asparagine glycan. A disulfide bridge connects residues cysteine 436 and cysteine 482. Asparagine 556 is a glycosylation site (N-linked (GlcNAc...) asparagine).

It belongs to the glycosyl hydrolase 32 family. As to expression, expressed in roots. Weakly expressed in flowers.

It is found in the secreted. The protein localises to the extracellular space. Its subcellular location is the apoplast. It localises to the cell wall. The enzyme catalyses Hydrolysis of terminal non-reducing beta-D-fructofuranoside residues in beta-D-fructofuranosides.. The sequence is that of Beta-fructofuranosidase, insoluble isoenzyme 6 (CIN6) from Oryza sativa subsp. japonica (Rice).